The primary structure comprises 125 residues: Large ribosomal subunit protein bL12 (125 aa).

Belongs to the bacterial ribosomal protein bL12 family. In terms of assembly, homodimer. Part of the ribosomal stalk of the 50S ribosomal subunit. Forms a multimeric L10(L12)X complex, where L10 forms an elongated spine to which 2 to 4 L12 dimers bind in a sequential fashion. Binds GTP-bound translation factors.

In terms of biological role, forms part of the ribosomal stalk which helps the ribosome interact with GTP-bound translation factors. Is thus essential for accurate translation. The protein is Large ribosomal subunit protein bL12 of Rickettsia conorii (strain ATCC VR-613 / Malish 7).